Reading from the N-terminus, the 631-residue chain is Dolichyl-diphosphooligosaccharide--protein glycosyltransferase subunit 2 (631 aa).

The N-terminal stretch at 1–22 (MASPGASTVFLLALTILAGTQA) is a signal peptide. The Lumenal segment spans residues 23 to 540 (LTPTHYLTKP…REPEKRPPTV (518 aa)). Asparagine 106 carries an N-linked (GlcNAc...) asparagine glycan. A Glycyl lysine isopeptide (Lys-Gly) (interchain with G-Cter in ubiquitin) cross-link involves residue lysine 154. Residues 541–561 (VSNTFTALILSPLLLLFALWI) form a helical membrane-spanning segment. Residues 562 to 571 (RIGANVSNFT) lie on the Cytoplasmic side of the membrane. A helical transmembrane segment spans residues 572–592 (FAPSTIIFHLGHAAMLGLMYV). Residues 593 to 596 (YWTQ) are Lumenal-facing. The chain crosses the membrane as a helical span at residues 597–617 (LNMFQTLKYLAILGSVTFLAG). Over 618-631 (NRMLAQQAIKRTAH) the chain is Cytoplasmic.

Belongs to the SWP1 family. In terms of assembly, component of the oligosaccharyltransferase (OST) complex. OST exists in two different complex forms which contain common core subunits RPN1, RPN2, OST48, OST4, DAD1 and TMEM258, either STT3A or STT3B as catalytic subunits, and form-specific accessory subunits. STT3A complex assembly occurs through the formation of 3 subcomplexes. Subcomplex 1 contains RPN1 and TMEM258, subcomplex 2 contains the STT3A-specific subunits STT3A, DC2/OSTC, and KCP2 as well as the core subunit OST4, and subcomplex 3 contains RPN2, DAD1, and OST48. The STT3A complex can form stable complexes with the Sec61 complex or with both the Sec61 and TRAP complexes. Interacts with DDI2. Interacts with TMEM35A/NACHO.

It is found in the endoplasmic reticulum. Its subcellular location is the endoplasmic reticulum membrane. It participates in protein modification; protein glycosylation. Its function is as follows. Subunit of the oligosaccharyl transferase (OST) complex that catalyzes the initial transfer of a defined glycan (Glc(3)Man(9)GlcNAc(2) in eukaryotes) from the lipid carrier dolichol-pyrophosphate to an asparagine residue within an Asn-X-Ser/Thr consensus motif in nascent polypeptide chains, the first step in protein N-glycosylation. N-glycosylation occurs cotranslationally and the complex associates with the Sec61 complex at the channel-forming translocon complex that mediates protein translocation across the endoplasmic reticulum (ER). All subunits are required for a maximal enzyme activity. This is Dolichyl-diphosphooligosaccharide--protein glycosyltransferase subunit 2 from Canis lupus familiaris (Dog).